We begin with the raw amino-acid sequence, 147 residues long: Leghemoglobin 3 (147 aa).

Positions 2–147 (GFTAQQEALV…LATAIKKAMG (146 aa)) constitute a Globin domain. At Tyr30 the chain carries Nitrated tyrosine. Ser45 is a binding site for heme b. Phosphoserine is present on Ser45. His61 contacts O2. Heme b is bound by residues Lys64, His93, and Lys96. At Tyr135 the chain carries Nitrated tyrosine.

This sequence belongs to the plant globin family. As to quaternary structure, monomer. Nitrated in effective nodules and particularly in hypoxic conditions; this mechanism may play a protective role in the symbiosis by buffering toxic peroxynitrite NO(2)(-). Nitration level decrease during nodule senescence. Post-translationally, phosphorylation at Ser-45 disrupts the molecular environment of its porphyrin ring oxygen binding pocket, thus leading to a reduced oxygen consumption and to the delivery of oxygen O(2) to symbiosomes. In terms of tissue distribution, specifically and strongly expressed in root nodules and at low levels in seedlings.

Its subcellular location is the cytoplasm. It is found in the cytosol. The protein resides in the nucleus. Functionally, leghemoglobin that reversibly binds oxygen O(2) through a pentacoordinated heme iron. In root nodules, facilitates the diffusion of oxygen to the bacteroids while preventing the bacterial nitrogenase from being inactivated by buffering dioxygen, nitric oxide and carbon monoxide, and promoting the formation of reactive oxygen species (ROS, e.g. H(2)O(2)). This role is essential for symbiotic nitrogen fixation (SNF). This chain is Leghemoglobin 3, found in Lotus japonicus (Lotus corniculatus var. japonicus).